Here is a 764-residue protein sequence, read N- to C-terminus: Probable 5-methyltetrahydropteroyltriglutamate--homocysteine methyltransferase (764 aa).

Positions 19 and 126 each coordinate 5-methyltetrahydropteroyltri-L-glutamate. S182 bears the Phosphoserine mark. A Phosphothreonine modification is found at T441. Residues 442 to 444 (IGS) and E495 each bind L-homocysteine. Residues 442–444 (IGS) and E495 contribute to the L-methionine site. 5-methyltetrahydropteroyltri-L-glutamate contacts are provided by residues D500, Y523, 526–527 (RC), and W572. D610 provides a ligand contact to L-homocysteine. L-methionine is bound at residue D610. Zn(2+) contacts are provided by H652, C654, and E676. H703 (proton donor) is an active-site residue. Position 735 (C735) interacts with Zn(2+).

Belongs to the vitamin-B12 independent methionine synthase family. The cofactor is Zn(2+).

The protein localises to the nucleus. Its subcellular location is the cytoplasm. It catalyses the reaction 5-methyltetrahydropteroyltri-L-glutamate + L-homocysteine = tetrahydropteroyltri-L-glutamate + L-methionine. It functions in the pathway amino-acid biosynthesis; L-methionine biosynthesis via de novo pathway; L-methionine from L-homocysteine (MetE route): step 1/1. Functionally, catalyzes the transfer of a methyl group from 5-methyltetrahydrofolate to homocysteine resulting in methionine formation. This is Probable 5-methyltetrahydropteroyltriglutamate--homocysteine methyltransferase (met26) from Schizosaccharomyces pombe (strain 972 / ATCC 24843) (Fission yeast).